An 89-amino-acid polypeptide reads, in one-letter code: Small ribosomal subunit protein bS20 (89 aa).

The protein belongs to the bacterial ribosomal protein bS20 family.

In terms of biological role, binds directly to 16S ribosomal RNA. In Stenotrophomonas maltophilia (strain K279a), this protein is Small ribosomal subunit protein bS20.